Consider the following 183-residue polypeptide: dTTP/UTP pyrophosphatase (183 aa).

Residue aspartate 64 is the Proton acceptor of the active site.

Belongs to the Maf family. YhdE subfamily. A divalent metal cation serves as cofactor.

The protein resides in the cytoplasm. The enzyme catalyses dTTP + H2O = dTMP + diphosphate + H(+). It carries out the reaction UTP + H2O = UMP + diphosphate + H(+). Its function is as follows. Nucleoside triphosphate pyrophosphatase that hydrolyzes dTTP and UTP. May have a dual role in cell division arrest and in preventing the incorporation of modified nucleotides into cellular nucleic acids. This Acinetobacter baylyi (strain ATCC 33305 / BD413 / ADP1) protein is dTTP/UTP pyrophosphatase.